The primary structure comprises 479 residues: Pyruvate kinase (479 aa).

Arginine 36 is a substrate binding site. The K(+) site is built by asparagine 38, serine 40, and aspartate 70. ATP is bound at residue 38–41; the sequence is NFSH. ATP is bound by residues arginine 77 and lysine 160. Glutamate 225 lines the Mg(2+) pocket. Residues glycine 251, aspartate 252, and threonine 284 each contribute to the substrate site. Aspartate 252 lines the Mg(2+) pocket.

This sequence belongs to the pyruvate kinase family. Homotetramer. Mg(2+) serves as cofactor. Requires K(+) as cofactor.

The enzyme catalyses pyruvate + ATP = phosphoenolpyruvate + ADP + H(+). The protein operates within carbohydrate degradation; glycolysis; pyruvate from D-glyceraldehyde 3-phosphate: step 5/5. Its activity is regulated as follows. Allosterically activated by AMP and by several sugar phosphates. Belongs to type II PK. This chain is Pyruvate kinase (pykA), found in Buchnera aphidicola subsp. Baizongia pistaciae (strain Bp).